The sequence spans 147 residues: Hemoglobin subunit epsilon (147 aa).

A Globin domain is found at 3-147 (HLTAEEKAAI…VAIALGHKYH (145 aa)). Residues serine 14 and serine 51 each carry the phosphoserine modification. Histidine 64 and histidine 93 together coordinate heme b.

Belongs to the globin family. In terms of assembly, heterotetramer of two alpha chains and two epsilon chains in early embryonic hemoglobin Gower-2; two zeta chains and two epsilon chains in early embryonic hemoglobin Gower-1. Red blood cells.

The epsilon chain is a beta-type chain of early mammalian embryonic hemoglobin. The chain is Hemoglobin subunit epsilon (HBE1) from Ateles belzebuth (White-bellied spider monkey).